A 122-amino-acid chain; its full sequence is Large ribosomal subunit protein uL14 (122 aa).

This sequence belongs to the universal ribosomal protein uL14 family. In terms of assembly, part of the 50S ribosomal subunit. Forms a cluster with proteins L3 and L19. In the 70S ribosome, L14 and L19 interact and together make contacts with the 16S rRNA in bridges B5 and B8.

In terms of biological role, binds to 23S rRNA. Forms part of two intersubunit bridges in the 70S ribosome. This is Large ribosomal subunit protein uL14 from Lysinibacillus sphaericus (strain C3-41).